Reading from the N-terminus, the 243-residue chain is Transmembrane protein 174 (243 aa).

2 consecutive transmembrane segments (helical) span residues 40-60 (LLFS…MGWI) and 73-93 (LLGP…VCKF).

In terms of assembly, interacts with SLC34A1; regulates SLC34A1 internalization by PTH and FGF23. Kidney specific. Expressed in renal primary proximal tubule cells.

The protein localises to the endoplasmic reticulum membrane. The protein resides in the apical cell membrane. Functionally, regulator of plasma phosphate homeostasis. Decreases serum inorganic phosphate (Pi) uptake by regulating the sodium-phosphate cotransporter SLC34A1 trafficking by PTH and FGF23 in the kidney. The polypeptide is Transmembrane protein 174 (Tmem174) (Mus musculus (Mouse)).